A 77-amino-acid chain; its full sequence is Acyl carrier protein (77 aa).

A Carrier domain is found at 2-77; that stretch reads STVEERVKKI…DAIDYIVAHT (76 aa). The residue at position 37 (Ser37) is an O-(pantetheine 4'-phosphoryl)serine.

The protein belongs to the acyl carrier protein (ACP) family. In terms of processing, 4'-phosphopantetheine is transferred from CoA to a specific serine of apo-ACP by AcpS. This modification is essential for activity because fatty acids are bound in thioester linkage to the sulfhydryl of the prosthetic group.

Its subcellular location is the cytoplasm. It participates in lipid metabolism; fatty acid biosynthesis. Carrier of the growing fatty acid chain in fatty acid biosynthesis. The protein is Acyl carrier protein of Marinobacter nauticus (strain ATCC 700491 / DSM 11845 / VT8) (Marinobacter aquaeolei).